Consider the following 116-residue polypeptide: MAGRSGDSDDQLLLAVRLIKILYQSNPYPKPNGSRQARRNRRRRWRARQNQIDSISERIPSSCLGRPAEPVPLQLPPIERLRLDCSEDCGNSGTQGVGDPQISGEPCMVLGAGTKE.

Phosphoserine; by host CK2 is present on residues S5 and S8. Residues 18–26 form a homomultimerization region; the sequence is LIKILYQSN. The interval 26-50 is disordered; the sequence is NPYPKPNGSRQARRNRRRRWRARQN. The Nuclear localization signal and RNA-binding (RRE) signature appears at 34 to 50; sequence SRQARRNRRRRWRARQN. A compositionally biased stretch (basic residues) spans 36–47; the sequence is QARRNRRRRWRA. The short motif at 73 to 84 is the Nuclear export signal and binding to XPO1 element; that stretch reads LQLPPIERLRLD. Residues 91–116 form a disordered region; it reads NSGTQGVGDPQISGEPCMVLGAGTKE. Position 92 is a phosphoserine; by host (S92).

This sequence belongs to the HIV-1 REV protein family. In terms of assembly, homomultimer; when bound to the RRE. Multimeric assembly is essential for activity and may involve XPO1. Binds to human KPNB1, XPO1, TNPO1, RANBP5 and IPO7. Interacts with the viral Integrase. Interacts with human KHDRBS1. Interacts with human NAP1; this interaction decreases Rev multimerization and stimulates its activity. Interacts with human DEAD-box helicases DDX3 and DDX24; these interactions may serve for viral RNA export to the cytoplasm and packaging, respectively. Interacts with human PSIP1; this interaction may inhibit HIV-1 DNA integration by promoting dissociation of the Integrase-LEDGF/p75 complex. In terms of processing, asymmetrically arginine dimethylated at one site by host PRMT6. Methylation impairs the RNA-binding activity and export of viral RNA from the nucleus to the cytoplasm. Post-translationally, phosphorylated by protein kinase CK2. Presence of, and maybe binding to the N-terminus of the regulatory beta subunit of CK2 is necessary for CK2-mediated Rev's phosphorylation.

It is found in the host nucleus. It localises to the host nucleolus. Its subcellular location is the host cytoplasm. In terms of biological role, escorts unspliced or incompletely spliced viral pre-mRNAs (late transcripts) out of the nucleus of infected cells. These pre-mRNAs carry a recognition sequence called Rev responsive element (RRE) located in the env gene, that is not present in fully spliced viral mRNAs (early transcripts). This function is essential since most viral proteins are translated from unspliced or partially spliced pre-mRNAs which cannot exit the nucleus by the pathway used by fully processed cellular mRNAs. Rev itself is translated from a fully spliced mRNA that readily exits the nucleus. Rev's nuclear localization signal (NLS) binds directly to KPNB1/Importin beta-1 without previous binding to KPNA1/Importin alpha-1. KPNB1 binds to the GDP bound form of RAN (Ran-GDP) and targets Rev to the nucleus. In the nucleus, the conversion from Ran-GDP to Ran-GTP dissociates Rev from KPNB1 and allows Rev's binding to the RRE in viral pre-mRNAs. Rev multimerization on the RRE via cooperative assembly exposes its nuclear export signal (NES) to the surface. Rev can then form a complex with XPO1/CRM1 and Ran-GTP, leading to nuclear export of the complex. Conversion from Ran-GTP to Ran-GDP mediates dissociation of the Rev/RRE/XPO1/RAN complex, so that Rev can return to the nucleus for a subsequent round of export. Beside KPNB1, also seems to interact with TNPO1/Transportin-1, RANBP5/IPO5 and IPO7/RANBP7 for nuclear import. The nucleoporin-like HRB/RIP is an essential cofactor that probably indirectly interacts with Rev to release HIV RNAs from the perinuclear region to the cytoplasm. This chain is Protein Rev, found in Homo sapiens (Human).